We begin with the raw amino-acid sequence, 224 residues long: tRNA (guanine-N(7)-)-methyltransferase (224 aa).

S-adenosyl-L-methionine-binding residues include E54, E79, D106, and D129. D129 is an active-site residue. 2 residues coordinate substrate: K133 and D165.

The protein belongs to the class I-like SAM-binding methyltransferase superfamily. TrmB family.

It catalyses the reaction guanosine(46) in tRNA + S-adenosyl-L-methionine = N(7)-methylguanosine(46) in tRNA + S-adenosyl-L-homocysteine. It participates in tRNA modification; N(7)-methylguanine-tRNA biosynthesis. Its function is as follows. Catalyzes the formation of N(7)-methylguanine at position 46 (m7G46) in tRNA. The polypeptide is tRNA (guanine-N(7)-)-methyltransferase (Chlamydia felis (strain Fe/C-56) (Chlamydophila felis)).